A 529-amino-acid chain; its full sequence is Meiosis 1 arrest protein (529 aa).

2 disordered regions span residues Lys180 to Ser201 and Ala504 to Thr529. Residues Ser188–Ser200 show a composition bias toward polar residues. The residue at position 516 (Ser516) is a Phosphoserine.

As to expression, expressed in germ cells of the testis. Expressed from spermatogonia to spermatids. Expressed at very low levels in lung, stomach, thymus. Not detected in Sertoli cells.

The protein resides in the cytoplasm. Functionally, required for meiosis I progression during spermatogenesis. The sequence is that of Meiosis 1 arrest protein (M1ap) from Mus musculus (Mouse).